The sequence spans 242 residues: Ribonuclease 3 (242 aa).

One can recognise an RNase III domain in the interval 14-142 (LRRFAARFAL…VIGALYLSTG (129 aa)). Residue glutamate 56 coordinates Mg(2+). Aspartate 60 is a catalytic residue. Residues aspartate 128 and glutamate 131 each coordinate Mg(2+). The active site involves glutamate 131. Positions 170 to 235 (NHKSALQELT…ARGAYAALRS (66 aa)) constitute a DRBM domain.

It belongs to the ribonuclease III family. As to quaternary structure, homodimer. Mg(2+) serves as cofactor.

The protein resides in the cytoplasm. The catalysed reaction is Endonucleolytic cleavage to 5'-phosphomonoester.. Digests double-stranded RNA. Involved in the processing of primary rRNA transcript to yield the immediate precursors to the large and small rRNAs (23S and 16S). Processes some mRNAs, and tRNAs when they are encoded in the rRNA operon. Processes pre-crRNA and tracrRNA of type II CRISPR loci if present in the organism. The chain is Ribonuclease 3 from Gloeobacter violaceus (strain ATCC 29082 / PCC 7421).